We begin with the raw amino-acid sequence, 173 residues long: Protein-export protein SecB (173 aa).

It belongs to the SecB family. As to quaternary structure, homotetramer, a dimer of dimers. One homotetramer interacts with 1 SecA dimer.

The protein resides in the cytoplasm. One of the proteins required for the normal export of preproteins out of the cell cytoplasm. It is a molecular chaperone that binds to a subset of precursor proteins, maintaining them in a translocation-competent state. It also specifically binds to its receptor SecA. The polypeptide is Protein-export protein SecB (Novosphingobium aromaticivorans (strain ATCC 700278 / DSM 12444 / CCUG 56034 / CIP 105152 / NBRC 16084 / F199)).